Consider the following 302-residue polypeptide: RING-H2 finger protein ATL38 (302 aa).

The helical transmembrane segment at 15–35 (LLVITIILFAIFIVGLASVCF) threads the bilayer. The RING-type; atypical zinc-finger motif lies at 96-138 (CAVCICEFEDHETLRLMPECCHVFHADCVSVWLSDHSTCPLCR). The interval 279 to 302 (GEAVAPSKDSRRISVEQSQLDDRV) is disordered. The segment covering 286–302 (KDSRRISVEQSQLDDRV) has biased composition (basic and acidic residues).

The protein belongs to the RING-type zinc finger family. ATL subfamily.

Its subcellular location is the membrane. The enzyme catalyses S-ubiquitinyl-[E2 ubiquitin-conjugating enzyme]-L-cysteine + [acceptor protein]-L-lysine = [E2 ubiquitin-conjugating enzyme]-L-cysteine + N(6)-ubiquitinyl-[acceptor protein]-L-lysine.. The protein operates within protein modification; protein ubiquitination. In Arabidopsis thaliana (Mouse-ear cress), this protein is RING-H2 finger protein ATL38 (ATL38).